The following is a 149-amino-acid chain: 3-dehydroquinate dehydratase (149 aa).

Tyr-26 functions as the Proton acceptor in the catalytic mechanism. Residues Asn-78, His-84, and Asp-91 each contribute to the substrate site. His-104 serves as the catalytic Proton donor. Residues 105 to 106 (IS) and Arg-115 each bind substrate.

Belongs to the type-II 3-dehydroquinase family. Homododecamer.

It catalyses the reaction 3-dehydroquinate = 3-dehydroshikimate + H2O. It participates in metabolic intermediate biosynthesis; chorismate biosynthesis; chorismate from D-erythrose 4-phosphate and phosphoenolpyruvate: step 3/7. Its function is as follows. Catalyzes a trans-dehydration via an enolate intermediate. The polypeptide is 3-dehydroquinate dehydratase (aroQ) (Buchnera aphidicola subsp. Schizaphis graminum (strain Sg)).